Consider the following 204-residue polypeptide: MTEQKVVIIDTGCANVSSVKFAIERLGYDVTISKDPQVVLSADKLFLPGVGTASEAMKNLEERDLISLVKQVEKPLLGICLGMQLLGKVSQEKGQKADELVECLGLCDGEVKLLQTGDLPLPHMGWNTVSAKAGNPLFKGIEEGEYFYFVHSFAMPVGDYTIAECEYGNSFTAAVQSGNYYGVQFHPERSSKAGAKLIQNFLEL.

Residues Lys-5 to Leu-204 form the Glutamine amidotransferase type-1 domain. Cys-80 functions as the Nucleophile in the catalytic mechanism. Catalysis depends on residues His-186 and Glu-188.

Heterodimer of HisH and HisF.

The protein localises to the cytoplasm. The enzyme catalyses 5-[(5-phospho-1-deoxy-D-ribulos-1-ylimino)methylamino]-1-(5-phospho-beta-D-ribosyl)imidazole-4-carboxamide + L-glutamine = D-erythro-1-(imidazol-4-yl)glycerol 3-phosphate + 5-amino-1-(5-phospho-beta-D-ribosyl)imidazole-4-carboxamide + L-glutamate + H(+). The catalysed reaction is L-glutamine + H2O = L-glutamate + NH4(+). The protein operates within amino-acid biosynthesis; L-histidine biosynthesis; L-histidine from 5-phospho-alpha-D-ribose 1-diphosphate: step 5/9. In terms of biological role, IGPS catalyzes the conversion of PRFAR and glutamine to IGP, AICAR and glutamate. The HisH subunit provides the glutamine amidotransferase activity that produces the ammonia necessary to HisF for the synthesis of IGP and AICAR. In Vibrio vulnificus (strain YJ016), this protein is Imidazole glycerol phosphate synthase subunit HisH 1 (hisH1).